The following is a 154-amino-acid chain: Putative ankyrin repeat protein RBE_1220 (154 aa).

ANK repeat units lie at residues 78–108 (EKVNILNVAAANNSVTVINYLLDNNIFNVDQ) and 113–142 (NSRTALHSAVKENAMESTKFLLKKEQILIL).

In Rickettsia bellii (strain RML369-C), this protein is Putative ankyrin repeat protein RBE_1220.